The chain runs to 260 residues: Global transcriptional regulator CodY (260 aa).

Residues 1-159 are GAF domain; the sequence is MPNLLEKTRK…SSTVVGIQLL (159 aa). Residues 207-226 constitute a DNA-binding region (H-T-H motif); sequence ASVIADRIGITRSVIVNALR.

Belongs to the CodY family.

The protein localises to the cytoplasm. Functionally, DNA-binding global transcriptional regulator which is involved in the adaptive response to starvation and acts by directly or indirectly controlling the expression of numerous genes in response to nutrient availability. During rapid exponential growth, CodY is highly active and represses genes whose products allow adaptation to nutrient depletion. The polypeptide is Global transcriptional regulator CodY (Streptococcus equi subsp. equi (strain 4047)).